The chain runs to 353 residues: Methylthioribose-1-phosphate isomerase (353 aa).

Substrate contacts are provided by residues 51 to 53, R94, and Q199; that span reads RGA. D240 (proton donor) is an active-site residue. 250 to 251 contributes to the substrate binding site; it reads NK.

The protein belongs to the EIF-2B alpha/beta/delta subunits family. MtnA subfamily. As to quaternary structure, homodimer.

It carries out the reaction 5-(methylsulfanyl)-alpha-D-ribose 1-phosphate = 5-(methylsulfanyl)-D-ribulose 1-phosphate. The protein operates within amino-acid biosynthesis; L-methionine biosynthesis via salvage pathway; L-methionine from S-methyl-5-thio-alpha-D-ribose 1-phosphate: step 1/6. Functionally, catalyzes the interconversion of methylthioribose-1-phosphate (MTR-1-P) into methylthioribulose-1-phosphate (MTRu-1-P). The polypeptide is Methylthioribose-1-phosphate isomerase (Bacillus cereus (strain ATCC 14579 / DSM 31 / CCUG 7414 / JCM 2152 / NBRC 15305 / NCIMB 9373 / NCTC 2599 / NRRL B-3711)).